The following is an 806-amino-acid chain: Lon protease (806 aa).

The 194-residue stretch at 14-207 (YPVLPLRDIV…KALGFMEGEI (194 aa)) folds into the Lon N-terminal domain. 359–366 (GPPGVGKT) contacts ATP. One can recognise a Lon proteolytic domain in the interval 594–775 (DDQVGVVTGL…GEVIAHALLR (182 aa)). Residues Ser681 and Lys724 contribute to the active site. A disordered region spans residues 786-806 (SQPAALPSVDSQDEAGTSIAH).

The protein belongs to the peptidase S16 family. Homohexamer. Organized in a ring with a central cavity.

The protein localises to the cytoplasm. The catalysed reaction is Hydrolysis of proteins in presence of ATP.. Functionally, ATP-dependent serine protease that mediates the selective degradation of mutant and abnormal proteins as well as certain short-lived regulatory proteins. Required for cellular homeostasis and for survival from DNA damage and developmental changes induced by stress. Degrades polypeptides processively to yield small peptide fragments that are 5 to 10 amino acids long. Binds to DNA in a double-stranded, site-specific manner. In R.meliloti it is important for controlling the turnover of a constitutively expressed protein(s) that, when unregulated, disrupts normal nodule formation and normal growth. In Rhizobium meliloti (strain 1021) (Ensifer meliloti), this protein is Lon protease.